An 807-amino-acid chain; its full sequence is Dual specificity protein kinase YAK1 (807 aa).

The segment covering Met-1–Ser-19 has biased composition (low complexity). Positions Met-1 to Ser-84 are disordered. Residues Leu-20–Ser-31 are compositionally biased toward polar residues. Ser-38 carries the post-translational modification Phosphoserine. Residues Asn-55–Ser-84 show a composition bias toward low complexity. A phosphoserine mark is found at Ser-115, Ser-118, and Ser-127. Residues Arg-124–Gly-180 form a disordered region. Polar residues predominate over residues Ala-149 to Asn-160. Positions Ser-161–Gly-180 are enriched in low complexity. At Ser-206 the chain carries Phosphoserine. The span at Ser-214 to Asn-224 shows a compositional bias: low complexity. The interval Ser-214–Phe-254 is disordered. Residues Ser-240, Ser-245, and Ser-247 each carry the phosphoserine modification. The residue at position 288 (Thr-288) is a Phosphothreonine. Ser-295 carries the post-translational modification Phosphoserine. The Protein kinase domain occupies Tyr-369–Ile-704. ATP is bound by residues Leu-375–Val-383 and Lys-398. The Proton acceptor role is filled by Asp-496. At Tyr-530 the chain carries Phosphotyrosine. Positions Phe-714–Ala-758 are disordered. The span at Gly-732–Ala-758 shows a compositional bias: polar residues.

The protein belongs to the protein kinase superfamily. CMGC Ser/Thr protein kinase family. MNB/DYRK subfamily. In terms of processing, phosphorylated; highly.

It localises to the cytoplasm. It is found in the nucleus. It carries out the reaction L-seryl-[protein] + ATP = O-phospho-L-seryl-[protein] + ADP + H(+). It catalyses the reaction L-threonyl-[protein] + ATP = O-phospho-L-threonyl-[protein] + ADP + H(+). The catalysed reaction is L-tyrosyl-[protein] + ATP = O-phospho-L-tyrosyl-[protein] + ADP + H(+). Functionally, negative regulator of the cell cycle acting downstream of the cAMP-dependent protein kinase. Part of a glucose-sensing system involved in growth control in response to glucose availability. Phosphorylates POP2. This chain is Dual specificity protein kinase YAK1 (YAK1), found in Saccharomyces cerevisiae (strain ATCC 204508 / S288c) (Baker's yeast).